The following is a 136-amino-acid chain: ATP synthase epsilon chain (136 aa).

It belongs to the ATPase epsilon chain family. F-type ATPases have 2 components, CF(1) - the catalytic core - and CF(0) - the membrane proton channel. CF(1) has five subunits: alpha(3), beta(3), gamma(1), delta(1), epsilon(1). CF(0) has three main subunits: a, b and c.

Its subcellular location is the cell inner membrane. Its function is as follows. Produces ATP from ADP in the presence of a proton gradient across the membrane. This is ATP synthase epsilon chain from Agrobacterium fabrum (strain C58 / ATCC 33970) (Agrobacterium tumefaciens (strain C58)).